A 444-amino-acid polypeptide reads, in one-letter code: Alpha-(1,3)-fucosyltransferase B (444 aa).

The Cytoplasmic segment spans residues 1–6; sequence MRLAQR. A helical; Signal-anchor for type II membrane protein membrane pass occupies residues 7 to 27; sequence YGIALVALLMVGATVLFFWSE. At 28-444 the chain is on the lumenal side; it reads NIINYENIKF…GNNCSNSSNT (417 aa). N-linked (GlcNAc...) asparagine glycans are attached at residues Asn-279, Asn-437, and Asn-440.

Belongs to the glycosyltransferase 10 family.

Its subcellular location is the golgi apparatus. It is found in the golgi stack membrane. The protein operates within protein modification; protein glycosylation. This is Alpha-(1,3)-fucosyltransferase B (FucTB) from Drosophila melanogaster (Fruit fly).